The primary structure comprises 481 residues: uncharacterized protein (481 aa).

10 helical membrane passes run 32–52, 82–102, 137–157, 173–193, 204–224, 258–278, 289–309, 348–368, 392–412, and 418–438; these read LSWL…YWGV, FFHW…IMAY, MFLI…AATF, VQAF…WIGI, VGWG…TEFI, WTVF…MFVT, VIWG…GVME, LFLA…MDAV, LFWC…GASL, and TVVL…GGFI.

This sequence belongs to the BCCT transporter (TC 2.A.15) family.

It localises to the cell inner membrane. Its function is as follows. Probable transporter whose substrate is unknown. Is not involved in aerobic D-malate transport. This is an uncharacterized protein from Escherichia coli (strain K12).